The sequence spans 561 residues: DNA ligase B (561 aa).

The N6-AMP-lysine intermediate role is filled by lysine 125.

This sequence belongs to the NAD-dependent DNA ligase family. LigB subfamily.

The catalysed reaction is NAD(+) + (deoxyribonucleotide)n-3'-hydroxyl + 5'-phospho-(deoxyribonucleotide)m = (deoxyribonucleotide)n+m + AMP + beta-nicotinamide D-nucleotide.. Its function is as follows. Catalyzes the formation of phosphodiester linkages between 5'-phosphoryl and 3'-hydroxyl groups in double-stranded DNA using NAD as a coenzyme and as the energy source for the reaction. The sequence is that of DNA ligase B from Salmonella choleraesuis (strain SC-B67).